We begin with the raw amino-acid sequence, 177 residues long: UPF0114 protein HPP12_0190 (177 aa).

4 consecutive transmembrane segments (helical) span residues 15–35 (WLLA…GYAF), 54–74 (LVLS…VLMV), 102–122 (FNAL…IFLL), and 145–165 (PIFW…LAAV).

Belongs to the UPF0114 family.

It is found in the cell membrane. This Helicobacter pylori (strain P12) protein is UPF0114 protein HPP12_0190.